The sequence spans 414 residues: Serine/threonine transporter SstT (414 aa).

The Cytoplasmic portion of the chain corresponds to 2-15 (TTQRSPGLFRRLAH). Residues 16 to 36 (GSLVKQILVGLVLGILLAWIS) traverse the membrane as a helical segment. Residues 37–45 (KPAAEAVGL) are Periplasmic-facing. The helical transmembrane segment at 46 to 66 (LGTLFVGALKAVAPILVLMLV) threads the bilayer. Residues 67–83 (MASIANHQHGQKTNIRP) lie on the Cytoplasmic side of the membrane. A helical membrane pass occupies residues 84–104 (ILFLYLLGTFSAALAAVVFSF). The Periplasmic segment spans residues 105–142 (AFPSTLHLSSSAGDISPPSGIVEVMRGLVMSMVSNPID). A helical membrane pass occupies residues 143–163 (ALLKGNYIGILVWAIGLGFAL). At 164 to 179 (RHGNETTKNLVNDLSN) the chain is on the cytoplasmic side. A helical transmembrane segment spans residues 180 to 200 (AVTFMVKLVIRFAPIGIFGLV). Topologically, residues 201–217 (SSTLATTGFSTLWGYAQ) are periplasmic. A helical transmembrane segment spans residues 218-238 (LLVVLVGCMLLVALVVNPLLV). Over 239 to 299 (WWKIRRNPFP…VSIPLGATIN (61 aa)) the chain is Cytoplasmic. The chain crosses the membrane as a helical span at residues 300–320 (MAGAAITITVLTLAAVNTLGI). Residues 321–331 (PVDLPTALLLS) are Periplasmic-facing. The chain crosses the membrane as a helical span at residues 332-352 (VVASLCACGASGVAGGSLLLI). Over 353-414 (PLACNMFGIS…DRLANSALRN (62 aa)) the chain is Cytoplasmic.

The protein belongs to the dicarboxylate/amino acid:cation symporter (DAACS) (TC 2.A.23) family.

It localises to the cell inner membrane. It carries out the reaction L-serine(in) + Na(+)(in) = L-serine(out) + Na(+)(out). It catalyses the reaction L-threonine(in) + Na(+)(in) = L-threonine(out) + Na(+)(out). Involved in the import of serine and threonine into the cell, with the concomitant import of sodium (symport system). This Shigella boydii serotype 4 (strain Sb227) protein is Serine/threonine transporter SstT.